The following is a 502-amino-acid chain: Uric acid degradation bifunctional protein (502 aa).

The tract at residues 1 to 178 (MMRLKQLNEM…NSMTKHKERV (178 aa)) is OHCU decarboxylase. H68 acts as the Proton donor; for OHCU decarboxylase activity in catalysis. 5-hydroxy-2-oxo-4-ureido-2,5-dihydro-1H-imidazole-5-carboxylate-binding positions include P69, 81–85 (SQEEQ), and 116–120 (FVMAV). The tract at residues 179-502 (MYYGKGDVFA…DEPDHKGALK (324 aa)) is urate oxidase. K183 serves as the catalytic Charge relay system; for urate oxidase activity. The active-site Charge relay system is the K194. Residue T243 is the Charge relay system; for urate oxidase activity of the active site. Residues T243, D244, F354, R371, I419, Q420, and N446 each contribute to the urate site.

The protein in the N-terminal section; belongs to the OHCU decarboxylase family. In the C-terminal section; belongs to the uricase family.

The enzyme catalyses 5-hydroxy-2-oxo-4-ureido-2,5-dihydro-1H-imidazole-5-carboxylate + H(+) = (S)-allantoin + CO2. The catalysed reaction is urate + O2 + H2O = 5-hydroxyisourate + H2O2. The protein operates within purine metabolism; urate degradation; (S)-allantoin from urate: step 1/3. It functions in the pathway purine metabolism; urate degradation; (S)-allantoin from urate: step 3/3. In terms of biological role, catalyzes two steps in the degradation of uric acid, i.e. the oxidation of uric acid to 5-hydroxyisourate (HIU) and the stereoselective decarboxylation of 2-oxo-4-hydroxy-4-carboxy-5-ureidoimidazoline (OHCU) to (S)-allantoin. This is Uric acid degradation bifunctional protein (uao) from Bacillus sp. (strain TB-90).